Reading from the N-terminus, the 118-residue chain is Ribosome-binding factor A (118 aa).

It belongs to the RbfA family. In terms of assembly, monomer. Binds 30S ribosomal subunits, but not 50S ribosomal subunits or 70S ribosomes.

The protein localises to the cytoplasm. One of several proteins that assist in the late maturation steps of the functional core of the 30S ribosomal subunit. Associates with free 30S ribosomal subunits (but not with 30S subunits that are part of 70S ribosomes or polysomes). Required for efficient processing of 16S rRNA. May interact with the 5'-terminal helix region of 16S rRNA. In Thermodesulfovibrio yellowstonii (strain ATCC 51303 / DSM 11347 / YP87), this protein is Ribosome-binding factor A.